The chain runs to 152 residues: SsrA-binding protein (152 aa).

The protein belongs to the SmpB family.

It is found in the cytoplasm. Required for rescue of stalled ribosomes mediated by trans-translation. Binds to transfer-messenger RNA (tmRNA), required for stable association of tmRNA with ribosomes. tmRNA and SmpB together mimic tRNA shape, replacing the anticodon stem-loop with SmpB. tmRNA is encoded by the ssrA gene; the 2 termini fold to resemble tRNA(Ala) and it encodes a 'tag peptide', a short internal open reading frame. During trans-translation Ala-aminoacylated tmRNA acts like a tRNA, entering the A-site of stalled ribosomes, displacing the stalled mRNA. The ribosome then switches to translate the ORF on the tmRNA; the nascent peptide is terminated with the 'tag peptide' encoded by the tmRNA and targeted for degradation. The ribosome is freed to recommence translation, which seems to be the essential function of trans-translation. This Helicobacter pylori (strain Shi470) protein is SsrA-binding protein.